Here is a 549-residue protein sequence, read N- to C-terminus: MTDGPLIVQSDKTVLLEVDHELAGAARAAIAPFAELERAPEHVHTYRITPLALWNARAAGHDAEQVVDALVSYSRYAVPQPLLVDIVDTMARYGRLQLVKNPAHGLTLVSLDRAVLEEVLRNKKIAPMLGARIDDDTVVVHPSERGRVKQLLLKIGWPAEDLAGYVDGEAHPISLHQEGWQLRDYQRLAADSFWAGGSGVVVLPCGAGKTLVGAAAMAKAGATTLILVTNIVAARQWKRELVARTSLTENEIGEFSGERKEIRPVTISTYQMITRRTKGEYRHLELFDSRDWGLIIYDEVHLLPAPVFRMTADLQSKRRLGLTATLIREDGREGDVFSLIGPKRYDAPWKDIEAQGWIAPAECVEVRVTMTDSERMMYATAEPEERYRICSTVHTKIAVVKSILAKHPDEQTLVIGAYLDQLDELGAELGAPVIQGSTRTSEREALFDAFRRGEVATLVVSKVANFSIDLPEAAVAVQVSGTFGSRQEEAQRLGRILRPKADGGGAIFYSVVARDSLDAEYAAHRQRFLAEQGYGYIIRDADDLLGPAI.

The required for protein stability or solubility stretch occupies residues 1–130; that stretch reads MTDGPLIVQS…RNKKIAPMLG (130 aa). In terms of domain architecture, Helicase ATP-binding spans 190 to 344; the sequence is ADSFWAGGSG…DVFSLIGPKR (155 aa). 203-210 provides a ligand contact to ATP; sequence LPCGAGKT. The short motif at 298–301 is the DEAH box element; it reads DEVH. Residues 399–545 form the Helicase C-terminal domain; the sequence is VVKSILAKHP…YIIRDADDLL (147 aa).

This sequence belongs to the helicase family. RAD25/XPB subfamily. In terms of assembly, monomer. Mn(2+) is required as a cofactor. It depends on Mg(2+) as a cofactor.

The enzyme catalyses Couples ATP hydrolysis with the unwinding of duplex DNA by translocating in the 3'-5' direction.. It carries out the reaction ATP + H2O = ADP + phosphate + H(+). In terms of biological role, ATP-dependent 3'-5' DNA helicase, unwinds 3'-overhangs, 3'- flaps, and splayed-arm DNA substrates but not 5'-overhangs, 5'-flap substrates, 3-way junctions or Holliday junctions. Not highly efficient in vitro. Requires ATP hydrolysis for helicase activity; the ATPase activity is DNA-dependent and requires a minimum of 4 single-stranded nucleotides (nt) with 6-10 nt providing all necessary interactions for full processive unwinding. The ATPase prefers ATP over CTP or GTP, is almost inactive with TTP. DNA helicase activity requires ATP or dATP and only acts when the 3'-overhang is &gt;20 nt. Capable of unwinding a DNA:RNA hybrid if the 3'-overhang is DNA. Also catalyzes ATP-independent annealing of complementary DNA strands; annealing requires Mg(2+). In Mycobacterium tuberculosis (strain ATCC 25618 / H37Rv), this protein is DNA 3'-5' helicase XPB.